The sequence spans 313 residues: Dihydroorotate dehydrogenase B (NAD(+)), catalytic subunit (313 aa).

FMN-binding positions include Ser-21 and 45–46 (KA). Substrate contacts are provided by residues Lys-45 and 69-73 (NAIGL). Asn-99 and Asn-127 together coordinate FMN. Substrate is bound at residue Asn-127. Cys-130 serves as the catalytic Nucleophile. FMN is bound by residues Lys-165 and Ile-191. 192 to 193 (NT) provides a ligand contact to substrate. Residues Gly-217, 243 to 244 (GG), and 265 to 266 (GT) each bind FMN.

Belongs to the dihydroorotate dehydrogenase family. Type 1 subfamily. As to quaternary structure, heterotetramer of 2 PyrK and 2 PyrD type B subunits. FMN serves as cofactor.

The protein localises to the cytoplasm. The enzyme catalyses (S)-dihydroorotate + NAD(+) = orotate + NADH + H(+). Its pathway is pyrimidine metabolism; UMP biosynthesis via de novo pathway; orotate from (S)-dihydroorotate (NAD(+) route): step 1/1. In terms of biological role, catalyzes the conversion of dihydroorotate to orotate with NAD(+) as electron acceptor. This is Dihydroorotate dehydrogenase B (NAD(+)), catalytic subunit (pyrD) from Geobacillus sp. (strain WCH70).